The primary structure comprises 281 residues: 2-dehydro-3-deoxyphosphooctonate aldolase (281 aa).

This sequence belongs to the KdsA family.

It is found in the cytoplasm. The catalysed reaction is D-arabinose 5-phosphate + phosphoenolpyruvate + H2O = 3-deoxy-alpha-D-manno-2-octulosonate-8-phosphate + phosphate. The protein operates within carbohydrate biosynthesis; 3-deoxy-D-manno-octulosonate biosynthesis; 3-deoxy-D-manno-octulosonate from D-ribulose 5-phosphate: step 2/3. It participates in bacterial outer membrane biogenesis; lipopolysaccharide biosynthesis. In Pseudomonas entomophila (strain L48), this protein is 2-dehydro-3-deoxyphosphooctonate aldolase.